Consider the following 293-residue polypeptide: Elongation factor Ts (293 aa).

The involved in Mg(2+) ion dislocation from EF-Tu stretch occupies residues Thr80–Val83.

The protein belongs to the EF-Ts family.

The protein resides in the cytoplasm. In terms of biological role, associates with the EF-Tu.GDP complex and induces the exchange of GDP to GTP. It remains bound to the aminoacyl-tRNA.EF-Tu.GTP complex up to the GTP hydrolysis stage on the ribosome. This chain is Elongation factor Ts, found in Burkholderia vietnamiensis (strain G4 / LMG 22486) (Burkholderia cepacia (strain R1808)).